The primary structure comprises 367 residues: tRNA/tmRNA (uracil-C(5))-methyltransferase (367 aa).

S-adenosyl-L-methionine is bound by residues Q189, Y217, N222, E238, and D298. The active-site Nucleophile is C323. E357 acts as the Proton acceptor in catalysis.

This sequence belongs to the class I-like SAM-binding methyltransferase superfamily. RNA M5U methyltransferase family. TrmA subfamily.

The enzyme catalyses uridine(54) in tRNA + S-adenosyl-L-methionine = 5-methyluridine(54) in tRNA + S-adenosyl-L-homocysteine + H(+). It carries out the reaction uridine(341) in tmRNA + S-adenosyl-L-methionine = 5-methyluridine(341) in tmRNA + S-adenosyl-L-homocysteine + H(+). Functionally, dual-specificity methyltransferase that catalyzes the formation of 5-methyluridine at position 54 (m5U54) in all tRNAs, and that of position 341 (m5U341) in tmRNA (transfer-mRNA). The protein is tRNA/tmRNA (uracil-C(5))-methyltransferase of Pseudoalteromonas translucida (strain TAC 125).